Consider the following 162-residue polypeptide: Troponin C, skeletal muscle (162 aa).

EF-hand domains lie at 17–52 (EMIA…LGQN), 53–88 (PTKE…QMKE), 93–128 (KSEE…TGEH), and 129–162 (VTEE…EGVQ). Asp30, Asp32, Asp36, Glu41, Asp66, Asp68, Ser70, Thr72, Glu77, Asp106, Asn108, Asp110, Glu117, Asp142, Asn144, Asp146, Arg148, and Glu153 together coordinate Ca(2+).

It belongs to the troponin C family.

Functionally, troponin is the central regulatory protein of striated muscle contraction. Tn consists of three components: Tn-I which is the inhibitor of actomyosin ATPase, Tn-T which contains the binding site for tropomyosin and Tn-C. The binding of calcium to Tn-C abolishes the inhibitory action of Tn on actin filaments. The protein is Troponin C, skeletal muscle (TNNC2) of Meleagris gallopavo (Wild turkey).